The following is a 346-amino-acid chain: Holliday junction branch migration complex subunit RuvB (346 aa).

The large ATPase domain (RuvB-L) stretch occupies residues 1 to 182 (MSEPARLISP…FGIPVRLSFY (182 aa)). ATP contacts are provided by residues Leu-21, Arg-22, Gly-63, Lys-66, Thr-67, Thr-68, 129–131 (EDF), Arg-172, Tyr-182, and Arg-219. Thr-67 provides a ligand contact to Mg(2+). The small ATPAse domain (RuvB-S) stretch occupies residues 183–253 (TVEELELIVR…IADEALTRLL (71 aa)). The segment at 256–346 (NVGFDQLDKR…AQFRLFQEDN (91 aa)) is head domain (RuvB-H). DNA is bound by residues Arg-292, Arg-311, and Arg-316.

Belongs to the RuvB family. Homohexamer. Forms an RuvA(8)-RuvB(12)-Holliday junction (HJ) complex. HJ DNA is sandwiched between 2 RuvA tetramers; dsDNA enters through RuvA and exits via RuvB. An RuvB hexamer assembles on each DNA strand where it exits the tetramer. Each RuvB hexamer is contacted by two RuvA subunits (via domain III) on 2 adjacent RuvB subunits; this complex drives branch migration. In the full resolvosome a probable DNA-RuvA(4)-RuvB(12)-RuvC(2) complex forms which resolves the HJ.

Its subcellular location is the cytoplasm. The catalysed reaction is ATP + H2O = ADP + phosphate + H(+). In terms of biological role, the RuvA-RuvB-RuvC complex processes Holliday junction (HJ) DNA during genetic recombination and DNA repair, while the RuvA-RuvB complex plays an important role in the rescue of blocked DNA replication forks via replication fork reversal (RFR). RuvA specifically binds to HJ cruciform DNA, conferring on it an open structure. The RuvB hexamer acts as an ATP-dependent pump, pulling dsDNA into and through the RuvAB complex. RuvB forms 2 homohexamers on either side of HJ DNA bound by 1 or 2 RuvA tetramers; 4 subunits per hexamer contact DNA at a time. Coordinated motions by a converter formed by DNA-disengaged RuvB subunits stimulates ATP hydrolysis and nucleotide exchange. Immobilization of the converter enables RuvB to convert the ATP-contained energy into a lever motion, pulling 2 nucleotides of DNA out of the RuvA tetramer per ATP hydrolyzed, thus driving DNA branch migration. The RuvB motors rotate together with the DNA substrate, which together with the progressing nucleotide cycle form the mechanistic basis for DNA recombination by continuous HJ branch migration. Branch migration allows RuvC to scan DNA until it finds its consensus sequence, where it cleaves and resolves cruciform DNA. In Rhizobium leguminosarum bv. trifolii (strain WSM2304), this protein is Holliday junction branch migration complex subunit RuvB.